The chain runs to 682 residues: Glutamine--fructose-6-phosphate aminotransferase [isomerizing] 2 (682 aa).

Catalysis depends on C2, which acts as the For GATase activity. Residues 2-288 (CGIFAYMNYR…DDDIAAVADG (287 aa)) enclose the Glutamine amidotransferase type-2 domain. S244 bears the Phosphoserine mark. 2 consecutive SIS domains span residues 360–499 (HLKE…DRIS) and 531–672 (LALE…VDFP). Residues 377–378 (TS), 422–424 (SQS), T427, and H578 each bind substrate.

The catalysed reaction is D-fructose 6-phosphate + L-glutamine = D-glucosamine 6-phosphate + L-glutamate. The protein operates within nucleotide-sugar biosynthesis; UDP-N-acetyl-alpha-D-glucosamine biosynthesis; alpha-D-glucosamine 6-phosphate from D-fructose 6-phosphate: step 1/1. Its function is as follows. Controls the flux of glucose into the hexosamine pathway. Most likely involved in regulating the availability of precursors for N- and O-linked glycosylation of proteins. In Bos taurus (Bovine), this protein is Glutamine--fructose-6-phosphate aminotransferase [isomerizing] 2 (GFPT2).